Here is a 965-residue protein sequence, read N- to C-terminus: Phosphoenolpyruvate carboxylase (965 aa).

Serine 11 carries the post-translational modification Phosphoserine. Active-site residues include histidine 173 and lysine 601.

Belongs to the PEPCase type 1 family. In terms of assembly, homotetramer. Mg(2+) serves as cofactor.

It is found in the cytoplasm. The enzyme catalyses oxaloacetate + phosphate = phosphoenolpyruvate + hydrogencarbonate. It functions in the pathway photosynthesis; C3 acid pathway. By light-reversible phosphorylation. Functionally, through the carboxylation of phosphoenolpyruvate (PEP) it forms oxaloacetate, a four-carbon dicarboxylic acid source for the tricarboxylic acid cycle. In Solanum tuberosum (Potato), this protein is Phosphoenolpyruvate carboxylase (PPC1).